Reading from the N-terminus, the 945-residue chain is Sensor kinase CckA (945 aa).

A run of 2 helical transmembrane segments spans residues 111–131 (ALRLLIVGILLMGAAFIYFLF) and 139–159 (FALVLMGVLSMVGVFYLFGAA). PAS domains follow at residues 171–212 (HQDL…TDAD), 313–341 (LDHAPAGFFSANPAGRIIYLNATLAEWLG), and 432–505 (AEVR…FAGQ). In terms of domain architecture, Histidine kinase spans 574-797 (GIAHDFNNVL…TFKIFLPRLI (224 aa)). Histidine 577 carries the phosphohistidine; by autocatalysis modification. Residues 825-941 (TVLLVEDEDA…QLATTVKEML (117 aa)) enclose the Response regulatory domain. Aspartate 876 is subject to 4-aspartylphosphate.

It localises to the cell inner membrane. The catalysed reaction is ATP + protein L-histidine = ADP + protein N-phospho-L-histidine.. Its function is as follows. Component of a regulatory phosphorelay system that controls B.abortus cell growth, division, and intracellular survival inside mammalian host cells. This signaling pathway is composed of CckA, ChpT, CtrA and CpdR. CckA autophosphorylates in the presence of ATP on a conserved His residue and transfers a phosphoryl group to a conserved Asp residue on its C-terminal receiver domain. CckA-P transfers phosphoryl groups to the ChpT phosphotransferase. The chain is Sensor kinase CckA from Brucella abortus (strain 2308).